The primary structure comprises 2957 residues: Toxin PAU_02230 (2957 aa).

The disordered stretch occupies residues 949–968 (TSVSPAETAQSTPEPLSDFA). Residues 2115–2144 (EWFKHSETGLKGGGPIDDIRKYIARKSAIK) are membrane localization domain that interacts with the inner leaflet of the plasma membrane. The tyrosine glycosyltransferase PaToxG stretch occupies residues 2115–2449 (EWFKHSETGL…TSTIVTPLAP (335 aa)). UDP-N-acetyl-alpha-D-glucosamine contacts are provided by residues 2169–2171 (IWI) and 2259–2260 (SD). Positions 2276 and 2278 each coordinate a divalent metal cation. The short motif at 2276–2279 (DIDD) is the DxDD motif element. A UDP-N-acetyl-alpha-D-glucosamine-binding site is contributed by Asn-2312. Positions 2450-2672 (KTEMLPPVPS…NYSVNPTAEN (223 aa)) are sseI-like deamidase PaToxD. Residues Cys-2509, His-2547, and Asp-2562 each act as for deamidase activity in the active site. The segment at 2667–2705 (NPTAENLSPPPPPPIPSHGQVPKTVTPPPPPMRSPLSLS) is disordered.

The cofactor is a divalent metal cation.

It localises to the secreted. Its subcellular location is the host cell membrane. It catalyses the reaction L-tyrosyl-[protein] + UDP-N-acetyl-alpha-D-glucosamine = O-(N-acetyl-alpha-D-glucosaminyl)-L-tyrosyl-[protein] + UDP + H(+). It carries out the reaction L-glutaminyl-[protein] + H2O = L-glutamyl-[protein] + NH4(+). Functionally, toxin that acts on host cells by modifying Rho proteins by tyrosine GlcNAcylation and heterotrimeric G alpha proteins by deamidation. Catalyzes the mono-O-GlcNAcylation of small GTPases of the Rho family (RhoA, RhoB, RhoC, Rac1, Rac2, Rac3, Cdc42) in eukaryotic host cells at the conserved tyrosine residue located in the switch I region (Tyr-32/34), using UDP-N-acetylglucosamine (UDP-GlcNAc) as the sugar donor; other GTPases of the Rho, Ras or Rab families are not substrates. Tyrosine glycosylation inhibits Rho activation and prevents interaction with downstream effectors, resulting in actin disassembly, inhibition of phagocytosis, cell rounding, and toxicity toward insects and mammalian cells. Also catalyzes the deamidation of the catalytic glutamine in heterotrimeric G alpha proteins (Gi, Gq/11), which blocks GTP hydrolysis and arrests the G proteins in a permanent active state leading to activation of Rho GTPases. Thus, PaTox hijacks host GTPase signaling in a bidirectional manner by deamidation-induced activation and glycosylation-induced inactivation of GTPases. In Photorhabdus asymbiotica subsp. asymbiotica (strain ATCC 43949 / 3105-77) (Xenorhabdus luminescens (strain 2)), this protein is Toxin PAU_02230.